The following is a 212-amino-acid chain: MRGKFISLEGGEGSGKTTAIHFIRQWLDDHKIPYIMTREPGGTPLAEEIRQLVLTPRDESVNDVTELLLVFAARAQHLAEKIQPALEKGTWVISDRFLDSSYVYQGKARGGDIAMLDQLANWVVGDNKPDATLVLDVPVELGQERVVQRQHQDRLDKESFAFHQKVRDGFLERAEADPKRVKIVDASQSLESVKSQIEEQLAKLNEAWAGDC.

Glycine 10 to threonine 17 provides a ligand contact to ATP.

The protein belongs to the thymidylate kinase family.

It catalyses the reaction dTMP + ATP = dTDP + ADP. Functionally, phosphorylation of dTMP to form dTDP in both de novo and salvage pathways of dTTP synthesis. The sequence is that of Thymidylate kinase from Marinomonas sp. (strain MWYL1).